The following is a 190-amino-acid chain: Probable chorismate pyruvate-lyase (190 aa).

3 residues coordinate substrate: Arg77, Leu115, and Glu174.

It belongs to the UbiC family.

The protein resides in the cytoplasm. It carries out the reaction chorismate = 4-hydroxybenzoate + pyruvate. The protein operates within cofactor biosynthesis; ubiquinone biosynthesis. Its function is as follows. Removes the pyruvyl group from chorismate, with concomitant aromatization of the ring, to provide 4-hydroxybenzoate (4HB) for the ubiquinone pathway. In Shewanella sp. (strain MR-4), this protein is Probable chorismate pyruvate-lyase.